The sequence spans 154 residues: Nucleoside diphosphate kinase A2 (154 aa).

The ATP site is built by lysine 13, phenylalanine 61, arginine 89, threonine 95, arginine 106, and asparagine 116. Residue histidine 119 is the Pros-phosphohistidine intermediate of the active site.

Belongs to the NDK family. Requires Mg(2+) as cofactor.

Its subcellular location is the cytoplasm. It catalyses the reaction a 2'-deoxyribonucleoside 5'-diphosphate + ATP = a 2'-deoxyribonucleoside 5'-triphosphate + ADP. The enzyme catalyses a ribonucleoside 5'-diphosphate + ATP = a ribonucleoside 5'-triphosphate + ADP. In terms of biological role, major role in the synthesis of nucleoside triphosphates other than ATP. The ATP gamma phosphate is transferred to the NDP beta phosphate via a ping-pong mechanism, using a phosphorylated active-site intermediate. The sequence is that of Nucleoside diphosphate kinase A2 from Xenopus laevis (African clawed frog).